The chain runs to 168 residues: Chorismate pyruvate-lyase (168 aa).

The substrate site is built by Met36, Arg78, Leu116, and Glu157.

The protein belongs to the UbiC family. As to quaternary structure, monomer.

The protein resides in the cytoplasm. The enzyme catalyses chorismate = 4-hydroxybenzoate + pyruvate. It functions in the pathway cofactor biosynthesis; ubiquinone biosynthesis. Its function is as follows. Removes the pyruvyl group from chorismate, with concomitant aromatization of the ring, to provide 4-hydroxybenzoate (4HB) for the ubiquinone pathway. This is Chorismate pyruvate-lyase from Photorhabdus laumondii subsp. laumondii (strain DSM 15139 / CIP 105565 / TT01) (Photorhabdus luminescens subsp. laumondii).